Consider the following 372-residue polypeptide: tRNA-specific 2-thiouridylase MnmA (372 aa).

ATP is bound by residues 16 to 23 (GMSGGVDS) and methionine 42. The segment at 102 to 104 (NPD) is interaction with target base in tRNA. The active-site Nucleophile is the cysteine 107. Cysteine 107 and cysteine 205 are disulfide-bonded. ATP is bound at residue glycine 132. Residues 155 to 157 (KDQ) form an interaction with tRNA region. Cysteine 205 (cysteine persulfide intermediate) is an active-site residue. The interval 317 to 318 (RY) is interaction with tRNA.

It belongs to the MnmA/TRMU family.

The protein resides in the cytoplasm. The catalysed reaction is S-sulfanyl-L-cysteinyl-[protein] + uridine(34) in tRNA + AH2 + ATP = 2-thiouridine(34) in tRNA + L-cysteinyl-[protein] + A + AMP + diphosphate + H(+). Its function is as follows. Catalyzes the 2-thiolation of uridine at the wobble position (U34) of tRNA, leading to the formation of s(2)U34. This is tRNA-specific 2-thiouridylase MnmA from Shewanella oneidensis (strain ATCC 700550 / JCM 31522 / CIP 106686 / LMG 19005 / NCIMB 14063 / MR-1).